A 223-amino-acid polypeptide reads, in one-letter code: Deoxyribose-phosphate aldolase (223 aa).

Residue D89 is the Proton donor/acceptor of the active site. Catalysis depends on K152, which acts as the Schiff-base intermediate with acetaldehyde. K181 functions as the Proton donor/acceptor in the catalytic mechanism.

Belongs to the DeoC/FbaB aldolase family. DeoC type 1 subfamily.

It localises to the cytoplasm. It carries out the reaction 2-deoxy-D-ribose 5-phosphate = D-glyceraldehyde 3-phosphate + acetaldehyde. Its pathway is carbohydrate degradation; 2-deoxy-D-ribose 1-phosphate degradation; D-glyceraldehyde 3-phosphate and acetaldehyde from 2-deoxy-alpha-D-ribose 1-phosphate: step 2/2. Catalyzes a reversible aldol reaction between acetaldehyde and D-glyceraldehyde 3-phosphate to generate 2-deoxy-D-ribose 5-phosphate. This chain is Deoxyribose-phosphate aldolase, found in Bacillus cereus (strain B4264).